A 1690-amino-acid chain; its full sequence is Restin homolog (1690 aa).

Composition is skewed to polar residues over residues 1 to 11 (MSDDTSASGGT) and 39 to 51 (NIPT…TGIP). The tract at residues 1 to 105 (MSDDTSASGG…ESDDNLSSIN (105 aa)) is disordered. 2 positions are modified to phosphoserine: Ser-64 and Ser-67. Residues 143–185 (GDTHFAAGEWAGVVLDEPNGKNDGCVSGKRYFQCEPKRGIFSR) enclose the CAP-Gly 1 domain. Positions 195-227 (AGAQTPTSPLAKSSPDRSRTVSPTASIRSSMLR) are disordered. Over residues 214–226 (TVSPTASIRSSML) the composition is skewed to polar residues. Ser-216 is modified (phosphoserine). The 43-residue stretch at 260–302 (GETQFAPGNWCGVELDEPSGKNDGTVDDIRYFECKPKYGVFVP) folds into the CAP-Gly 2 domain. A phosphoserine mark is found at Ser-309, Ser-322, and Ser-325. Residue Thr-327 is modified to Phosphothreonine. Ser-328 carries the phosphoserine modification. Thr-362 bears the Phosphothreonine mark. Coiled coils occupy residues 378–468 (QHVE…VSAT), 484–660 (GALQ…DMLR), 667–916 (EEKS…TKLK), 926–981 (LSSC…ELQA), 1001–1121 (ATGH…EAIQ), 1158–1549 (EADM…AQMN), and 1565–1600 (DIET…LETL). The tract at residues 843–905 (QQAAASGEEG…GSLEEEAKKS (63 aa)) is disordered. The segment covering 865–885 (QLKSQAEETQSELKSTQSNLE) has biased composition (polar residues). Disordered regions lie at residues 1031 to 1052 (QLQD…KEKS) and 1400 to 1419 (KLDE…NEIQ). 2 stretches are compositionally biased toward basic and acidic residues: residues 1040–1052 (TKLK…KEKS) and 1410–1419 (SQKKSHNEIQ). The tract at residues 1635–1665 (TEDCPIQGSEDQDYSTPSSESNNNEKERKLP) is disordered. Thr-1681 is subject to Phosphothreonine. At Ser-1682 the chain carries Phosphoserine.

In terms of assembly, interacts with Lva. Specifically expressed at the tip of the furrow in cellularizing blastoderms. CLIP-190 and jar are coexpressed at several times in development and in a number of tissues, including embryonic axonal neuron processes and posterior pole.

The protein localises to the cytoplasm. It localises to the cytoskeleton. The protein resides in the golgi apparatus. It is found in the microtubule organizing center. Its subcellular location is the perinuclear region. Functionally, together CLIP-190 and jar may coordinate the interaction between the actin and microtubule cytoskeleton. May link endocytic vesicles to microtubules. May play a role in formation of furrows during cellularization. This chain is Restin homolog (CLIP-190), found in Drosophila melanogaster (Fruit fly).